The primary structure comprises 360 residues: MKSSILEKLERLKERYEEVSALLSEADVINNQARFRDLSKEYAELEPVVVAYKGYLQLLADIEEAKHLIAEGDADMREMAEEELEGCEARLEPTELELQKLLLPKDPNDEKNCYLEVRAGTGGDEAAIFSGDLFRMYSRYAETQGWRVEILSQSEGEHGGFKEIISLVSGSGVYSKLKFESGAHRVQRVPETESQGRIHTSACTVAVMPEADELEEVNINKADLRIDTYRASGAGGQHVNKTDSAIRITHIPTGIVVECQDERSQHKNRARAMSLLATKLKTMQEEAAHKSISEERRNLVGSGDRSERIRTYNYPQGRVTDHRINLTLYSLDAVMQGDLEPVIGPLANEYQADQLAAIAD.

Position 237 is an N5-methylglutamine (glutamine 237).

It belongs to the prokaryotic/mitochondrial release factor family. Post-translationally, methylated by PrmC. Methylation increases the termination efficiency of RF1.

The protein localises to the cytoplasm. In terms of biological role, peptide chain release factor 1 directs the termination of translation in response to the peptide chain termination codons UAG and UAA. The polypeptide is Peptide chain release factor 1 (Cellvibrio japonicus (strain Ueda107) (Pseudomonas fluorescens subsp. cellulosa)).